The sequence spans 796 residues: Polyribonucleotide nucleotidyltransferase (796 aa).

Residues D490 and D496 each coordinate Mg(2+). The 60-residue stretch at 557–616 (PRIESIFINKDKIRNVIGSGGKNIRDICEKTGAKIEIIQDGTVMIYAVNNEAVEYAKSMI) folds into the KH domain. The 68-residue stretch at 626-693 (GKVFEGTVVE…DREHVQLSMR (68 aa)) folds into the S1 motif domain. Low complexity predominate over residues 714 to 736 (SFSDDSSSSGTSSSGSSFKESYS). Positions 714–796 (SFSDDSSSSG…HEVPRKPRFF (83 aa)) are disordered. The span at 740 to 755 (HGSHEKRRSGGSRSSR) shows a compositional bias: basic residues. The span at 771 to 784 (SDFGNNNRSFSNSR) shows a compositional bias: low complexity. Positions 785-796 (NGHEVPRKPRFF) are enriched in basic and acidic residues.

This sequence belongs to the polyribonucleotide nucleotidyltransferase family. Mg(2+) is required as a cofactor.

Its subcellular location is the cytoplasm. It carries out the reaction RNA(n+1) + phosphate = RNA(n) + a ribonucleoside 5'-diphosphate. Involved in mRNA degradation. Catalyzes the phosphorolysis of single-stranded polyribonucleotides processively in the 3'- to 5'-direction. The protein is Polyribonucleotide nucleotidyltransferase of Ehrlichia canis (strain Jake).